The primary structure comprises 469 residues: L-seryl-tRNA(Sec) selenium transferase (469 aa).

K295 bears the N6-(pyridoxal phosphate)lysine mark.

Belongs to the SelA family. Pyridoxal 5'-phosphate is required as a cofactor.

Its subcellular location is the cytoplasm. The catalysed reaction is L-seryl-tRNA(Sec) + selenophosphate + H(+) = L-selenocysteinyl-tRNA(Sec) + phosphate. The protein operates within aminoacyl-tRNA biosynthesis; selenocysteinyl-tRNA(Sec) biosynthesis; selenocysteinyl-tRNA(Sec) from L-seryl-tRNA(Sec) (bacterial route): step 1/1. In terms of biological role, converts seryl-tRNA(Sec) to selenocysteinyl-tRNA(Sec) required for selenoprotein biosynthesis. In Methylocella silvestris (strain DSM 15510 / CIP 108128 / LMG 27833 / NCIMB 13906 / BL2), this protein is L-seryl-tRNA(Sec) selenium transferase.